The following is a 227-amino-acid chain: Cytochrome c oxidase subunit 2 (227 aa).

At 1–14 (MAYPFQLGLQDATS) the chain is on the mitochondrial intermembrane side. A helical transmembrane segment spans residues 15–45 (PIMEELTNFHDHTLMIVFLISSLVLYIISLM). The Mitochondrial matrix segment spans residues 46–59 (LTTKLTHTSTMDAQ). A helical membrane pass occupies residues 60 to 87 (EVETIWTILPAAILILIALPSLRILYMM). Residues 88-227 (DEINNPVLTV…YFENWSTSMI (140 aa)) are Mitochondrial intermembrane-facing. Cu cation contacts are provided by His161, Cys196, Glu198, Cys200, His204, and Met207. A Mg(2+)-binding site is contributed by Glu198. The residue at position 218 (Tyr218) is a Phosphotyrosine.

The protein belongs to the cytochrome c oxidase subunit 2 family. Component of the cytochrome c oxidase (complex IV, CIV), a multisubunit enzyme composed of 14 subunits. The complex is composed of a catalytic core of 3 subunits MT-CO1, MT-CO2 and MT-CO3, encoded in the mitochondrial DNA, and 11 supernumerary subunits COX4I, COX5A, COX5B, COX6A, COX6B, COX6C, COX7A, COX7B, COX7C, COX8 and NDUFA4, which are encoded in the nuclear genome. The complex exists as a monomer or a dimer and forms supercomplexes (SCs) in the inner mitochondrial membrane with NADH-ubiquinone oxidoreductase (complex I, CI) and ubiquinol-cytochrome c oxidoreductase (cytochrome b-c1 complex, complex III, CIII), resulting in different assemblies (supercomplex SCI(1)III(2)IV(1) and megacomplex MCI(2)III(2)IV(2)). Found in a complex with TMEM177, COA6, COX18, COX20, SCO1 and SCO2. Interacts with TMEM177 in a COX20-dependent manner. Interacts with COX20. Interacts with COX16. The cofactor is Cu cation.

The protein localises to the mitochondrion inner membrane. The enzyme catalyses 4 Fe(II)-[cytochrome c] + O2 + 8 H(+)(in) = 4 Fe(III)-[cytochrome c] + 2 H2O + 4 H(+)(out). In terms of biological role, component of the cytochrome c oxidase, the last enzyme in the mitochondrial electron transport chain which drives oxidative phosphorylation. The respiratory chain contains 3 multisubunit complexes succinate dehydrogenase (complex II, CII), ubiquinol-cytochrome c oxidoreductase (cytochrome b-c1 complex, complex III, CIII) and cytochrome c oxidase (complex IV, CIV), that cooperate to transfer electrons derived from NADH and succinate to molecular oxygen, creating an electrochemical gradient over the inner membrane that drives transmembrane transport and the ATP synthase. Cytochrome c oxidase is the component of the respiratory chain that catalyzes the reduction of oxygen to water. Electrons originating from reduced cytochrome c in the intermembrane space (IMS) are transferred via the dinuclear copper A center (CU(A)) of subunit 2 and heme A of subunit 1 to the active site in subunit 1, a binuclear center (BNC) formed by heme A3 and copper B (CU(B)). The BNC reduces molecular oxygen to 2 water molecules using 4 electrons from cytochrome c in the IMS and 4 protons from the mitochondrial matrix. This is Cytochrome c oxidase subunit 2 (MT-CO2) from Arvicanthis somalicus (Neumann's grass rat).